We begin with the raw amino-acid sequence, 621 residues long: ATP-dependent lipid A-core flippase (621 aa).

A run of 5 helical transmembrane segments spans residues 32–52 (IVAALIAIFGVAATESYLAAF), 91–111 (VWGTENKIWTVPLFLIILVVI), 192–212 (IVLLYLNWQLSLIVVLMFPLL), 286–306 (SPFSELIASIALAVVIFIALW), and 312–332 (YTTIGEFMAFIVAMLQMYAPI). The 312-residue stretch at 33–344 (VAALIAIFGV…LANISIPMQT (312 aa)) folds into the ABC transmembrane type-1 domain. The ABC transporter domain maps to 378 to 611 (FRNVDVEYRS…NGYYTMLRNI (234 aa)). 410-417 (GRSGSGKS) provides a ligand contact to ATP.

The protein belongs to the ABC transporter superfamily. Lipid exporter (TC 3.A.1.106) family. As to quaternary structure, homodimer.

It localises to the cell inner membrane. The enzyme catalyses ATP + H2O + lipid A-core oligosaccharideSide 1 = ADP + phosphate + lipid A-core oligosaccharideSide 2.. Functionally, involved in lipopolysaccharide (LPS) biosynthesis. Translocates lipid A-core from the inner to the outer leaflet of the inner membrane. Transmembrane domains (TMD) form a pore in the inner membrane and the ATP-binding domain (NBD) is responsible for energy generation. The sequence is that of ATP-dependent lipid A-core flippase from Neisseria meningitidis serogroup A / serotype 4A (strain DSM 15465 / Z2491).